Consider the following 418-residue polypeptide: F-box protein At5g03970 (418 aa).

An F-box domain is found at 18–66; that stretch reads STHEVLNSNDTMCEILILLPPETIYKLILVSKRWLEIIASPCFRHTYLA.

The sequence is that of F-box protein At5g03970 from Arabidopsis thaliana (Mouse-ear cress).